A 313-amino-acid polypeptide reads, in one-letter code: Protein FixB (313 aa).

255–283 (LYLAVGISGQIQHMVGANASQTIFAINKD) serves as a coordination point for FAD.

Belongs to the ETF alpha-subunit/FixB family. Heterodimer of FixA and FixB.

It functions in the pathway amine and polyamine metabolism; carnitine metabolism. Functionally, required for anaerobic carnitine reduction. May bring reductant to CaiA. In Escherichia coli (strain 55989 / EAEC), this protein is Protein FixB.